The following is a 135-amino-acid chain: Class I hydrophobin dewA (135 aa).

The first 18 residues, 1–18 (MRFIVSLLAFTAAATATA), serve as a signal peptide directing secretion. Intrachain disulfides connect cysteine 44-cysteine 114, cysteine 51-cysteine 108, cysteine 52-cysteine 84, and cysteine 115-cysteine 122. N-linked (GlcNAc...) asparagine glycosylation occurs at asparagine 60.

The protein belongs to the fungal hydrophobin family. In terms of assembly, forms homodimers at high concentrations, and these dimers are off-pathway to rodlet formation. Dissociation of the dimers into monomers, with resultant exposure of the hydrophobic face, is necessary for self-assembly to form functional amyloid fibrils called rodlets. Self-assembly into fibrillar rodlets occurs spontaneously at hydrophobic:hydrophilic interfaces and the rodlets further associate laterally to form amphipathic monolayers.

Its subcellular location is the secreted. The protein localises to the spore wall. Functionally, aerial growth, conidiation, and dispersal of filamentous fungi in the environment rely upon a capability of their secreting small amphipathic proteins called hydrophobins (HPBs) with low sequence identity. Class I can self-assemble into an outermost layer of rodlet bundles on aerial cell surfaces, conferring cellular hydrophobicity that supports fungal growth, development and dispersal; whereas Class II form highly ordered films at water-air interfaces through intermolecular interactions but contribute nothing to the rodlet structure. DewA is a class I hydrophobin that contributes to spore wall hydrophobicity. In Emericella nidulans (strain FGSC A4 / ATCC 38163 / CBS 112.46 / NRRL 194 / M139) (Aspergillus nidulans), this protein is Class I hydrophobin dewA.